Here is a 550-residue protein sequence, read N- to C-terminus: Chaperonin GroEL (550 aa).

ATP-binding positions include 30-33 (TLGP), K51, 87-91 (DGTTT), G415, and D497.

Belongs to the chaperonin (HSP60) family. In terms of assembly, forms a cylinder of 14 subunits composed of two heptameric rings stacked back-to-back. Interacts with the co-chaperonin GroES.

The protein localises to the cytoplasm. The enzyme catalyses ATP + H2O + a folded polypeptide = ADP + phosphate + an unfolded polypeptide.. In terms of biological role, together with its co-chaperonin GroES, plays an essential role in assisting protein folding. The GroEL-GroES system forms a nano-cage that allows encapsulation of the non-native substrate proteins and provides a physical environment optimized to promote and accelerate protein folding. This is Chaperonin GroEL from Yersinia enterocolitica.